Here is a 575-residue protein sequence, read N- to C-terminus: Cyclic nucleotide-gated channel alpha-4 (575 aa).

The Cytoplasmic segment spans residues 1–38 (MSQDSKVKTTESTPPAPTKARKWLPVLDPSGDYYYWWL). The chain crosses the membrane as a helical span at residues 39–60 (NTMVFPIMYNLIIVVCRACFPD). The Extracellular portion of the chain corresponds to 61-70 (LQHSYLVAWF). The chain crosses the membrane as a helical span at residues 71–91 (VLDYTSDLLYLLDIGVRFHTG). Residues 92 to 116 (FLEQGILVVDKSMIASRYVRTWSFL) are Cytoplasmic-facing. Residues 117 to 135 (LDLASLVPTDAAYVQLGPH) form a helical membrane-spanning segment. Topologically, residues 136-140 (IPTLR) are extracellular. The chain crosses the membrane as a helical span at residues 141–159 (LNRFLRVPRLFEAFDRTET). The Cytoplasmic segment spans residues 160-166 (RTAYPNA). Residues 164-272 (PNAFRIAKLM…GSMSSVIYNM (109 aa)) form an ion conduction pathway region. The chain crosses the membrane as a helical span at residues 167–190 (FRIAKLMIYIFVVIHWNSCLYFAL). The Extracellular segment spans residues 191–213 (SRYLGFGRDAWVYPDPAQPGFER). 2 helical membrane-spanning segments follow: residues 214-248 (LRRQYLYSFYFSTLILTTVGDTPLPAREEEYLFMV) and 249-273 (GDFLLAVMGFATIMGSMSSVIYNMN). The tract at residues 231–234 (TVGD) is selectivity filter. Residues 274 to 350 (TADAAFYPDH…STLSRVQIFQ (77 aa)) are C-linker. At 274 to 575 (TADAAFYPDH…AGQEGPSGLE (302 aa)) the chain is on the cytoplasmic side. An IQ-type motif is present at residues 292–302 (LQHVNRRLERR). 348 to 471 (IFQNCEASLL…AVMEEKGREI (124 aa)) contributes to the a nucleoside 3',5'-cyclic phosphate binding site. Residues 354-474 (ASLLEELVLK…EEKGREILLK (121 aa)) form a cyclic nucleotide-binding domain region. Residues Gly414, Ser417, Arg430, and Thr431 each coordinate 3',5'-cyclic GMP. 3',5'-cyclic AMP contacts are provided by Arg430 and Thr431. Residues 493–547 (TESRLKGLDQQLDDLQTKFARLLAELESSALKIAYRIERLEWQTREWPMPDDMGE) adopt a coiled-coil conformation. A disordered region spans residues 536–575 (TREWPMPDDMGEADDEAEPGEGTSKDGEEKAGQEGPSGLE). Residues 544–554 (DMGEADDEAEP) are compositionally biased toward acidic residues. Basic and acidic residues predominate over residues 558–567 (TSKDGEEKAG).

The protein belongs to the cyclic nucleotide-gated cation channel (TC 1.A.1.5) family. CNGA4 subfamily. In terms of assembly, the olfactory cyclic nucleotide-gated channel is an heterotetramer composed of CNGA2, CNGA4 and CNGB1b subunits with 2:1:1 stoichiometry. As to expression, expressed in the olfactory epithelium.

It localises to the cell projection. Its subcellular location is the cilium membrane. It catalyses the reaction Ca(2+)(in) = Ca(2+)(out). The catalysed reaction is Na(+)(in) = Na(+)(out). The enzyme catalyses K(+)(in) = K(+)(out). It carries out the reaction NH4(+)(in) = NH4(+)(out). It catalyses the reaction Rb(+)(in) = Rb(+)(out). The catalysed reaction is Li(+)(in) = Li(+)(out). The enzyme catalyses Cs(+)(in) = Cs(+)(out). With respect to regulation, ca(2+)-calmodulin exerts its inhibitory effect in cAMP sensitivity by binding to IQ-like motif of CNGA4 and preferably binds to the channel in the closed state. Inhibition by PIP3 of the CNG channel probably occurs via CGNA2 binding. Its function is as follows. Pore-forming subunit of the olfactory cyclic nucleotide-gated channel. Operates in the cilia of olfactory sensory neurons where chemical stimulation of the odorant is converted to an electrical signal. Mediates odorant-induced cAMP-dependent Ca(2+) influx triggering neuron depolarization. The rise of intracellular Ca(2+) levels potentiates the olfactory response by activating Ca(2+)-dependent Cl(-) channels, but it also serves as a negative feedback signal to desensitize the channel for rapid adaptation to odorants. Conducts cGMP- and cAMP-gated ion currents, with permeability for monovalent and divalent cations. Conducts cAMP- and cGMP-gated ion currents, with permeability for monovalent and divalent cations. May conduct nitric oxide-gated Ca(2+) currents relevant to neurons of vomeronasal organ, a system involved in the perception of pheromones. The sequence is that of Cyclic nucleotide-gated channel alpha-4 from Mus musculus (Mouse).